A 146-amino-acid chain; its full sequence is Large ribosomal subunit protein uL15 (146 aa).

The disordered stretch occupies residues 1–51 (MKLHELQPAPGSRKKAVRVGRGIGSGNGKTSGRGQKGQNARSGGGVRLGFE). Composition is skewed to gly residues over residues 21 to 35 (RGIGSGNGKTSGRGQ) and 42 to 51 (SGGGVRLGFE).

It belongs to the universal ribosomal protein uL15 family. Part of the 50S ribosomal subunit.

Binds to the 23S rRNA. This is Large ribosomal subunit protein uL15 from Geobacillus kaustophilus (strain HTA426).